A 282-amino-acid polypeptide reads, in one-letter code: UDP-N-acetylenolpyruvoylglucosamine reductase (282 aa).

The FAD-binding PCMH-type domain maps to isoleucine 15–lysine 179. Arginine 157 is a catalytic residue. Catalysis depends on serine 207, which acts as the Proton donor. Residue glutamate 278 is part of the active site.

This sequence belongs to the MurB family. Requires FAD as cofactor.

The protein resides in the cytoplasm. It catalyses the reaction UDP-N-acetyl-alpha-D-muramate + NADP(+) = UDP-N-acetyl-3-O-(1-carboxyvinyl)-alpha-D-glucosamine + NADPH + H(+). It participates in cell wall biogenesis; peptidoglycan biosynthesis. Functionally, cell wall formation. This Francisella tularensis subsp. tularensis (strain SCHU S4 / Schu 4) protein is UDP-N-acetylenolpyruvoylglucosamine reductase.